Here is a 311-residue protein sequence, read N- to C-terminus: Bifunctional protein FolD (311 aa).

Position 174–176 (174–176 (GKG)) interacts with NADP(+).

The protein belongs to the tetrahydrofolate dehydrogenase/cyclohydrolase family. In terms of assembly, homodimer.

It carries out the reaction (6R)-5,10-methylene-5,6,7,8-tetrahydrofolate + NADP(+) = (6R)-5,10-methenyltetrahydrofolate + NADPH. The catalysed reaction is (6R)-5,10-methenyltetrahydrofolate + H2O = (6R)-10-formyltetrahydrofolate + H(+). The protein operates within one-carbon metabolism; tetrahydrofolate interconversion. Its function is as follows. Catalyzes the oxidation of 5,10-methylenetetrahydrofolate to 5,10-methenyltetrahydrofolate and then the hydrolysis of 5,10-methenyltetrahydrofolate to 10-formyltetrahydrofolate. The sequence is that of Bifunctional protein FolD from Pyrobaculum aerophilum (strain ATCC 51768 / DSM 7523 / JCM 9630 / CIP 104966 / NBRC 100827 / IM2).